The sequence spans 291 residues: ATP synthase gamma chain (291 aa).

Belongs to the ATPase gamma chain family. In terms of assembly, F-type ATPases have 2 components, CF(1) - the catalytic core - and CF(0) - the membrane proton channel. CF(1) has five subunits: alpha(3), beta(3), gamma(1), delta(1), epsilon(1). CF(0) has three main subunits: a, b and c.

The protein localises to the cell membrane. Produces ATP from ADP in the presence of a proton gradient across the membrane. The gamma chain is believed to be important in regulating ATPase activity and the flow of protons through the CF(0) complex. This Streptococcus uberis (strain ATCC BAA-854 / 0140J) protein is ATP synthase gamma chain.